The sequence spans 121 residues: Large ribosomal subunit protein uL18 (121 aa).

This sequence belongs to the universal ribosomal protein uL18 family. Part of the 50S ribosomal subunit; part of the 5S rRNA/L5/L18/L25 subcomplex. Contacts the 5S and 23S rRNAs.

This is one of the proteins that bind and probably mediate the attachment of the 5S RNA into the large ribosomal subunit, where it forms part of the central protuberance. The polypeptide is Large ribosomal subunit protein uL18 (Paracidovorax citrulli (strain AAC00-1) (Acidovorax citrulli)).